The primary structure comprises 215 residues: Pyridoxine/pyridoxamine 5'-phosphate oxidase (215 aa).

Substrate-binding positions include 9–12 (RRDY) and K67. FMN-binding positions include 62 to 67 (RVVLLK), 77 to 78 (FT), K84, and Q106. The substrate site is built by Y124, R128, and S132. FMN-binding positions include 141 to 142 (QS) and W186. 192–194 (RLH) contributes to the substrate binding site. R196 contributes to the FMN binding site.

It belongs to the pyridoxamine 5'-phosphate oxidase family. Homodimer. The cofactor is FMN.

The catalysed reaction is pyridoxamine 5'-phosphate + O2 + H2O = pyridoxal 5'-phosphate + H2O2 + NH4(+). It carries out the reaction pyridoxine 5'-phosphate + O2 = pyridoxal 5'-phosphate + H2O2. It participates in cofactor metabolism; pyridoxal 5'-phosphate salvage; pyridoxal 5'-phosphate from pyridoxamine 5'-phosphate: step 1/1. It functions in the pathway cofactor metabolism; pyridoxal 5'-phosphate salvage; pyridoxal 5'-phosphate from pyridoxine 5'-phosphate: step 1/1. Catalyzes the oxidation of either pyridoxine 5'-phosphate (PNP) or pyridoxamine 5'-phosphate (PMP) into pyridoxal 5'-phosphate (PLP). This chain is Pyridoxine/pyridoxamine 5'-phosphate oxidase, found in Chromohalobacter salexigens (strain ATCC BAA-138 / DSM 3043 / CIP 106854 / NCIMB 13768 / 1H11).